The primary structure comprises 485 residues: Probable RNA-binding protein 46 (485 aa).

3 RRM domains span residues 61–139 (CEVF…VSLD), 141–223 (CRLF…WADP), and 236–308 (KVLY…LAKP).

Interacts with YTHDC2, MEIOC, MOV10, CNOT6L, DDX4, UPF1 and PABPC1.

It localises to the cytoplasm. In terms of biological role, essential for male and female fertility, playing a crucial role in regulating germ cell development by ensuring the proper progression of meiosis prophase I. Regulates mitotic-to-meiotic transition in spermatogenesis by forming a complex with MEIOC and YTHDC2 which recognizes and down-regulates mitotic transcripts for a successful meiotic entry. Required for normal synaptonemal complex formation during meiosis, binding meiotic cohesin subunit mRNAs containing GCCUAU/GUUCGA motifs in their 3'UTRs regions and positively regulating their translation. Required for spermatogonial differentiation in both developing and adult testis. In Macaca fascicularis (Crab-eating macaque), this protein is Probable RNA-binding protein 46 (RBM46).